The following is a 144-amino-acid chain: NADH dehydrogenase [ubiquinone] 1 alpha subcomplex subunit 13 (144 aa).

Ala2 carries the post-translational modification N-acetylalanine. The chain crosses the membrane as a helical span at residues 30-51; the sequence is LSGYSMFAVGIGALIFGYWRMM.

Belongs to the complex I NDUFA13 subunit family. As to quaternary structure, complex I is composed of 45 different subunits. Interacts with CARD15, but not with CARD4. Interacts with STAT3, but not with STAT1, STAT2 and STAT5A. Interacts with OLFM4.

The protein resides in the mitochondrion inner membrane. It localises to the nucleus. Functionally, accessory subunit of the mitochondrial membrane respiratory chain NADH dehydrogenase (Complex I), that is believed not to be involved in catalysis. Complex I functions in the transfer of electrons from NADH to the respiratory chain. The immediate electron acceptor for the enzyme is believed to be ubiquinone. Involved in the interferon/all-trans-retinoic acid (IFN/RA) induced cell death. This apoptotic activity is inhibited by interaction with viral IRF1. Prevents the transactivation of STAT3 target genes. May play a role in CARD15-mediated innate mucosal responses and serve to regulate intestinal epithelial cell responses to microbes. The protein is NADH dehydrogenase [ubiquinone] 1 alpha subcomplex subunit 13 (Ndufa13) of Mus musculus (Mouse).